A 108-amino-acid polypeptide reads, in one-letter code: Nucleoid-associated protein Rmet_2128 (108 aa).

A compositionally biased stretch (polar residues) spans 86 to 96; the sequence is TTQEKMGSMTS. Residues 86–108 form a disordered region; sequence TTQEKMGSMTSGLPLPPGFKLPF. Residues 99 to 108 are compositionally biased toward pro residues; sequence PLPPGFKLPF.

Belongs to the YbaB/EbfC family. In terms of assembly, homodimer.

The protein resides in the cytoplasm. It localises to the nucleoid. In terms of biological role, binds to DNA and alters its conformation. May be involved in regulation of gene expression, nucleoid organization and DNA protection. The polypeptide is Nucleoid-associated protein Rmet_2128 (Cupriavidus metallidurans (strain ATCC 43123 / DSM 2839 / NBRC 102507 / CH34) (Ralstonia metallidurans)).